We begin with the raw amino-acid sequence, 89 residues long: Small ribosomal subunit protein uS15 (89 aa).

The protein belongs to the universal ribosomal protein uS15 family. As to quaternary structure, part of the 30S ribosomal subunit. Forms a bridge to the 50S subunit in the 70S ribosome, contacting the 23S rRNA.

Functionally, one of the primary rRNA binding proteins, it binds directly to 16S rRNA where it helps nucleate assembly of the platform of the 30S subunit by binding and bridging several RNA helices of the 16S rRNA. In terms of biological role, forms an intersubunit bridge (bridge B4) with the 23S rRNA of the 50S subunit in the ribosome. This Phocaeicola vulgatus (strain ATCC 8482 / DSM 1447 / JCM 5826 / CCUG 4940 / NBRC 14291 / NCTC 11154) (Bacteroides vulgatus) protein is Small ribosomal subunit protein uS15.